An 87-amino-acid chain; its full sequence is Acyl carrier protein 3 (87 aa).

The region spanning 1–79 (MSNPTVLDQI…DLVTYIEAAL (79 aa)) is the Carrier domain. Position 39 is an O-(pantetheine 4'-phosphoryl)serine (Ser-39).

The protein belongs to the acyl carrier protein (ACP) family. Post-translationally, 4'-phosphopantetheine is transferred from CoA to a specific serine of apo-ACP by AcpS. This modification is essential for activity because fatty acids are bound in thioester linkage to the sulfhydryl of the prosthetic group.

The protein localises to the cytoplasm. Its pathway is lipid metabolism; fatty acid biosynthesis. Functionally, carrier of the growing fatty acid chain in fatty acid biosynthesis. The sequence is that of Acyl carrier protein 3 from Ralstonia nicotianae (strain ATCC BAA-1114 / GMI1000) (Ralstonia solanacearum).